The chain runs to 315 residues: Olfactory receptor 4E1 (315 aa).

Residues 1–33 lie on the Extracellular side of the membrane; that stretch reads MEEAILLNQTSLVTYFRLRGLSVNHKARIAMFS. An N-linked (GlcNAc...) asparagine glycan is attached at Asn-8. The helical transmembrane segment at 34–54 threads the bilayer; it reads MFLIFYVLTLIGNVLIVITII. The Cytoplasmic segment spans residues 55–61; the sequence is YDHRLHT. Residues 62–82 form a helical membrane-spanning segment; sequence PMYFFLSNLSFIDVCHSTVTV. The Extracellular segment spans residues 83 to 101; it reads PKMLRDVWSEEKLISFDAC. Residues Cys-101 and Cys-183 are joined by a disulfide bond. Residues 102–122 form a helical membrane-spanning segment; the sequence is VTQMFFLHLFACTEIFLLTVM. Residues 123–143 lie on the Cytoplasmic side of the membrane; sequence AYDRYVAICKPLQYMIVMNWK. The chain crosses the membrane as a helical span at residues 144–164; it reads VCVLLAVALWTGGTIHSIALT. Topologically, residues 165 to 208 are extracellular; sequence SLTIKLPYCGPDEIDNFFCDVPQVIKLACIDTHVIEILIVSNSG. The chain crosses the membrane as a helical span at residues 209–229; sequence LISVVCFVVLVVSYAVILVSL. At 230–240 the chain is on the cytoplasmic side; the sequence is RQQISKGKRKA. A helical membrane pass occupies residues 241 to 261; sequence LSTCAAHLTVVTLFLGHCIFI. Over 262 to 272 the chain is Extracellular; it reads YSRPSTSLPED. Residues 273 to 293 form a helical membrane-spanning segment; it reads KVVSVFFTAVTPLLNPIIYTL. At 294–315 the chain is on the cytoplasmic side; that stretch reads RNEEMKSALNKLVGRKERKEEK.

This sequence belongs to the G-protein coupled receptor 1 family.

The protein localises to the cell membrane. In terms of biological role, odorant receptor. In Homo sapiens (Human), this protein is Olfactory receptor 4E1 (OR4E1).